Consider the following 276-residue polypeptide: Formamidopyrimidine-DNA glycosylase (276 aa).

Residue Pro2 is the Schiff-base intermediate with DNA of the active site. Residue Glu3 is the Proton donor of the active site. Catalysis depends on Lys60, which acts as the Proton donor; for beta-elimination activity. DNA-binding residues include His93, Arg112, and Arg155. The FPG-type zinc finger occupies 240-274 (LVYGRKDEACTKCGAEIIRFVVGGRGTHICPDCQK). Arg264 (proton donor; for delta-elimination activity) is an active-site residue.

Belongs to the FPG family. As to quaternary structure, monomer. Zn(2+) is required as a cofactor.

It catalyses the reaction Hydrolysis of DNA containing ring-opened 7-methylguanine residues, releasing 2,6-diamino-4-hydroxy-5-(N-methyl)formamidopyrimidine.. It carries out the reaction 2'-deoxyribonucleotide-(2'-deoxyribose 5'-phosphate)-2'-deoxyribonucleotide-DNA = a 3'-end 2'-deoxyribonucleotide-(2,3-dehydro-2,3-deoxyribose 5'-phosphate)-DNA + a 5'-end 5'-phospho-2'-deoxyribonucleoside-DNA + H(+). In terms of biological role, involved in base excision repair of DNA damaged by oxidation or by mutagenic agents. Acts as a DNA glycosylase that recognizes and removes damaged bases. Has a preference for oxidized purines, such as 7,8-dihydro-8-oxoguanine (8-oxoG). Has AP (apurinic/apyrimidinic) lyase activity and introduces nicks in the DNA strand. Cleaves the DNA backbone by beta-delta elimination to generate a single-strand break at the site of the removed base with both 3'- and 5'-phosphates. In Brevibacillus brevis (strain 47 / JCM 6285 / NBRC 100599), this protein is Formamidopyrimidine-DNA glycosylase.